A 208-amino-acid polypeptide reads, in one-letter code: Phosphoheptose isomerase (208 aa).

Residues 38–200 form the SIS domain; it reads MALTLARGRK…LFENVLALQP (163 aa). Residue 53 to 55 coordinates substrate; the sequence is NGG. Zn(2+) is bound by residues His62 and Glu66. Substrate-binding positions include Glu66, 95–96, 121–123, Ser126, and Gln173; these read ND and STS. Residues Gln173 and His181 each contribute to the Zn(2+) site.

The protein belongs to the SIS family. GmhA subfamily. Homotetramer. Zn(2+) is required as a cofactor.

It localises to the cytoplasm. The catalysed reaction is 2 D-sedoheptulose 7-phosphate = D-glycero-alpha-D-manno-heptose 7-phosphate + D-glycero-beta-D-manno-heptose 7-phosphate. It participates in carbohydrate biosynthesis; D-glycero-D-manno-heptose 7-phosphate biosynthesis; D-glycero-alpha-D-manno-heptose 7-phosphate and D-glycero-beta-D-manno-heptose 7-phosphate from sedoheptulose 7-phosphate: step 1/1. In terms of biological role, catalyzes the isomerization of sedoheptulose 7-phosphate in D-glycero-D-manno-heptose 7-phosphate. In Nitratidesulfovibrio vulgaris (strain DSM 19637 / Miyazaki F) (Desulfovibrio vulgaris), this protein is Phosphoheptose isomerase.